Here is a 419-residue protein sequence, read N- to C-terminus: Acyl-[acyl-carrier-protein] hydrolase FATB1, chloroplastic (419 aa).

A chloroplast-targeting transit peptide spans Met1–Ala50. A disordered region spans residues Met1–Ala84. Residues Ser61–Ser78 show a composition bias toward polar residues. Residues Asn315, His317, and Cys352 contribute to the active site. The segment at Ser390 to Ser419 is disordered. The span at Ala399–Ser419 shows a compositional bias: polar residues.

This sequence belongs to the acyl-ACP thioesterase family.

It is found in the plastid. The protein localises to the chloroplast. It carries out the reaction octanoyl-[ACP] + H2O = octanoate + holo-[ACP] + H(+). The enzyme catalyses decanoyl-[ACP] + H2O = decanoate + holo-[ACP] + H(+). Its function is as follows. Plays an essential role in chain termination during de novo fatty acid synthesis. Possesses thioesterase activity for short chain acyl-ACPs. Substrate preference is 8:0 &gt; 10:0. This chain is Acyl-[acyl-carrier-protein] hydrolase FATB1, chloroplastic, found in Cuphea viscosissima (Blue waxweed).